The primary structure comprises 110 residues: Large ribosomal subunit protein uL22 (110 aa).

This sequence belongs to the universal ribosomal protein uL22 family. As to quaternary structure, part of the 50S ribosomal subunit.

Functionally, this protein binds specifically to 23S rRNA; its binding is stimulated by other ribosomal proteins, e.g. L4, L17, and L20. It is important during the early stages of 50S assembly. It makes multiple contacts with different domains of the 23S rRNA in the assembled 50S subunit and ribosome. The globular domain of the protein is located near the polypeptide exit tunnel on the outside of the subunit, while an extended beta-hairpin is found that lines the wall of the exit tunnel in the center of the 70S ribosome. This chain is Large ribosomal subunit protein uL22, found in Pectobacterium atrosepticum (strain SCRI 1043 / ATCC BAA-672) (Erwinia carotovora subsp. atroseptica).